The primary structure comprises 354 residues: Selection and upkeep of intraepithelial T-cells protein 1 (354 aa).

The region spanning 23-141 (PSSEQFTVNS…EEAIAEVKVT (119 aa)) is the Ig-like V-type 1 domain. Disulfide bonds link Cys49–Cys123 and Cys163–Cys217. The region spanning 161-233 (VECNSEGWFP…TGQEERTSIV (73 aa)) is the Ig-like C1-type 2 domain. 3 helical membrane passes run 243 to 263 (SVWILILVAILAVLLFFIMMP), 283 to 303 (LIGIGIVFSSMCVIIGLTITL), and 326 to 346 (MTVMVWVLMVFITMLISLVYF).

Belongs to the SKINT family. Expressed in the thymus and skin.

The protein localises to the membrane. Its function is as follows. May act by engaging a cell surface molecule on immature T-cells in the embryonic thymus. The chain is Selection and upkeep of intraepithelial T-cells protein 1 (SKINT1) from Macaca fascicularis (Crab-eating macaque).